A 147-amino-acid chain; its full sequence is NADH-ubiquinone oxidoreductase chain 3 (147 aa).

Helical transmembrane passes span 6–26 (LFIL…LVFA), 60–80 (AICF…VGSL), and 84–104 (TFYS…GFVF).

Belongs to the complex I subunit 3 family.

It is found in the mitochondrion membrane. It carries out the reaction a ubiquinone + NADH + 5 H(+)(in) = a ubiquinol + NAD(+) + 4 H(+)(out). In terms of biological role, core subunit of the mitochondrial membrane respiratory chain NADH dehydrogenase (Complex I) that is believed to belong to the minimal assembly required for catalysis. Complex I functions in the transfer of electrons from NADH to the respiratory chain. The immediate electron acceptor for the enzyme is believed to be ubiquinone. This Neurospora crassa (strain ATCC 24698 / 74-OR23-1A / CBS 708.71 / DSM 1257 / FGSC 987) protein is NADH-ubiquinone oxidoreductase chain 3 (ndh-3).